Consider the following 182-residue polypeptide: Ribosome maturation factor RimM (182 aa).

A PRC barrel domain is found at 99-176; that stretch reads DDEYYHADLI…ELPAEIEGDT (78 aa).

Belongs to the RimM family. As to quaternary structure, binds ribosomal protein uS19.

The protein localises to the cytoplasm. An accessory protein needed during the final step in the assembly of 30S ribosomal subunit, possibly for assembly of the head region. Essential for efficient processing of 16S rRNA. May be needed both before and after RbfA during the maturation of 16S rRNA. It has affinity for free ribosomal 30S subunits but not for 70S ribosomes. This is Ribosome maturation factor RimM from Rhodopseudomonas palustris (strain HaA2).